Consider the following 172-residue polypeptide: Adenine phosphoribosyltransferase (172 aa).

Belongs to the purine/pyrimidine phosphoribosyltransferase family. As to quaternary structure, homodimer.

The protein resides in the cytoplasm. The enzyme catalyses AMP + diphosphate = 5-phospho-alpha-D-ribose 1-diphosphate + adenine. Its pathway is purine metabolism; AMP biosynthesis via salvage pathway; AMP from adenine: step 1/1. In terms of biological role, catalyzes a salvage reaction resulting in the formation of AMP, that is energically less costly than de novo synthesis. The protein is Adenine phosphoribosyltransferase of Picosynechococcus sp. (strain ATCC 27264 / PCC 7002 / PR-6) (Agmenellum quadruplicatum).